A 79-amino-acid polypeptide reads, in one-letter code: Small serum protein 3 (79 aa).

An N-terminal signal peptide occupies residues 1-19 (MKVFFILIIFSFTLATCQG). 3 disulfide bridges follow: Cys-21–Cys-72, Cys-39–Cys-64, and Cys-62–Cys-71.

The protein resides in the secreted. Functionally, shows an slight inhibitory effect toward the metalloproteinase brevilysin H6, but does not inhibit the metalloproteinases thermolysin, HR1A and HR1B. The sequence is that of Small serum protein 3 from Protobothrops flavoviridis (Habu).